A 540-amino-acid chain; its full sequence is uncharacterized protein (540 aa).

At M1 to T61 the chain is on the cytoplasmic side. A helical transmembrane segment spans residues Y62–L82. The Extracellular portion of the chain corresponds to N83–Q108. Residues A109–L129 form a helical membrane-spanning segment. Residues G130–D131 lie on the Cytoplasmic side of the membrane. The chain crosses the membrane as a helical span at residues I132–I152. Over S153–R169 the chain is Extracellular. Residues A170–V190 form a helical membrane-spanning segment. Over Y191–S203 the chain is Cytoplasmic. A helical membrane pass occupies residues F204 to V224. Topologically, residues T225–P232 are extracellular. The helical transmembrane segment at W233–I253 threads the bilayer. The Cytoplasmic segment spans residues P254–A272. The helical transmembrane segment at L273 to W293 threads the bilayer. Residues D294–K295 lie on the Extracellular side of the membrane. A helical transmembrane segment spans residues P296–E316. Over S317–H334 the chain is Cytoplasmic. Residues M335–Y355 traverse the membrane as a helical segment. Over Y356–G372 the chain is Extracellular. A helical transmembrane segment spans residues G373–I393. Residues K394–P398 lie on the Cytoplasmic side of the membrane. The helical transmembrane segment at A399 to L419 threads the bilayer. The Extracellular portion of the chain corresponds to P420 to N429. The chain crosses the membrane as a helical span at residues F430–I450. At L451–G461 the chain is on the cytoplasmic side. Residues M462–G482 form a helical membrane-spanning segment. Over G483–A502 the chain is Extracellular. Residues A503–L523 traverse the membrane as a helical segment. Topologically, residues E524–A540 are cytoplasmic.

The protein belongs to the major facilitator superfamily.

It is found in the membrane. This is an uncharacterized protein from Saccharomyces cerevisiae (strain ATCC 204508 / S288c) (Baker's yeast).